The sequence spans 443 residues: Elongation factor 1-alpha (443 aa).

In terms of domain architecture, tr-type G spans 5–228 (KTHINLVVIG…DTMQPPKRPY (224 aa)). The G1 stretch occupies residues 14-21 (GHVDSGKS). 14-21 (GHVDSGKS) contacts GTP. Residues 70–74 (GITID) form a G2 region. The interval 91–94 (DAPG) is G3. GTP is bound by residues 91 to 95 (DAPGH) and 153 to 156 (NKMD). Residues 153–156 (NKMD) form a G4 region. The tract at residues 192–194 (SGF) is G5.

Belongs to the TRAFAC class translation factor GTPase superfamily. Classic translation factor GTPase family. EF-Tu/EF-1A subfamily.

The protein resides in the cytoplasm. Functionally, this protein promotes the GTP-dependent binding of aminoacyl-tRNA to the A-site of ribosomes during protein biosynthesis. The chain is Elongation factor 1-alpha (MEF-1) from Plasmodium falciparum (isolate K1 / Thailand).